We begin with the raw amino-acid sequence, 650 residues long: L-aspartate N-monooxygenase (nitrosuccinate-forming) (650 aa).

The protein belongs to the nitrosuccinic acid synthase family. FAD is required as a cofactor.

It catalyses the reaction L-aspartate + 3 NADPH + 3 O2 + 2 H(+) = 2-nitrobutanedioate + 3 NADP(+) + 4 H2O. In terms of biological role, involved in the biosynthesis of desferrioxamine derivatives which have iron-binding properties and may act as siderophores. Catalyzes the iterative oxidation of L-aspartic acid to nitrosuccinic acid (2-nitrobutanedioate) via N-hydroxyaspartic acid and nitrososuccinic acid. This chain is L-aspartate N-monooxygenase (nitrosuccinate-forming), found in Streptomyces davaonensis (strain DSM 101723 / JCM 4913 / KCC S-0913 / 768).